A 279-amino-acid chain; its full sequence is Phosphatidylglycerol--prolipoprotein diacylglyceryl transferase (279 aa).

3 consecutive transmembrane segments (helical) span residues 22-42, 52-72, and 89-109; these read WYGIIIACGILLGYFIAQAAL, LIDIIFYSAIVGFIVARIYFV, and IWHGGIAIHGGLIGGLISGII. Arginine 137 contributes to the a 1,2-diacyl-sn-glycero-3-phospho-(1'-sn-glycerol) binding site. The next 2 membrane-spanning stretches (helical) occupy residues 203 to 223 and 235 to 255; these read LGETFFGYLIWYSVGRFFVEA and IRVAQLVSVVLILISVIFVIY.

This sequence belongs to the Lgt family.

It is found in the cell membrane. The catalysed reaction is L-cysteinyl-[prolipoprotein] + a 1,2-diacyl-sn-glycero-3-phospho-(1'-sn-glycerol) = an S-1,2-diacyl-sn-glyceryl-L-cysteinyl-[prolipoprotein] + sn-glycerol 1-phosphate + H(+). Its pathway is protein modification; lipoprotein biosynthesis (diacylglyceryl transfer). Functionally, catalyzes the transfer of the diacylglyceryl group from phosphatidylglycerol to the sulfhydryl group of the N-terminal cysteine of a prolipoprotein, the first step in the formation of mature lipoproteins. The polypeptide is Phosphatidylglycerol--prolipoprotein diacylglyceryl transferase (Staphylococcus epidermidis (strain ATCC 12228 / FDA PCI 1200)).